A 466-amino-acid polypeptide reads, in one-letter code: Ribulose bisphosphate carboxylase large chain (466 aa).

K5 is subject to N6,N6,N6-trimethyllysine. N114 and T164 together coordinate substrate. Catalysis depends on K166, which acts as the Proton acceptor. K168 lines the substrate pocket. Residues K192, D194, and E195 each coordinate Mg(2+). Position 192 is an N6-carboxylysine (K192). H285 functions as the Proton acceptor in the catalytic mechanism. The substrate site is built by R286, H318, and S370.

The protein belongs to the RuBisCO large chain family. Type I subfamily. As to quaternary structure, heterohexadecamer of 8 large chains and 8 small chains; disulfide-linked. The disulfide link is formed within the large subunit homodimers. Mg(2+) is required as a cofactor. Post-translationally, the disulfide bond which can form in the large chain dimeric partners within the hexadecamer appears to be associated with oxidative stress and protein turnover.

The protein resides in the plastid. Its subcellular location is the chloroplast. The enzyme catalyses 2 (2R)-3-phosphoglycerate + 2 H(+) = D-ribulose 1,5-bisphosphate + CO2 + H2O. The catalysed reaction is D-ribulose 1,5-bisphosphate + O2 = 2-phosphoglycolate + (2R)-3-phosphoglycerate + 2 H(+). In terms of biological role, ruBisCO catalyzes two reactions: the carboxylation of D-ribulose 1,5-bisphosphate, the primary event in carbon dioxide fixation, as well as the oxidative fragmentation of the pentose substrate in the photorespiration process. Both reactions occur simultaneously and in competition at the same active site. In Aesculus pavia (Red buckeye), this protein is Ribulose bisphosphate carboxylase large chain.